The primary structure comprises 589 residues: Protein POF1B (589 aa).

Residues 334 to 443 are a coiled coil; it reads TFSNIREELG…QNLRMQVSET (110 aa).

Interacts with nonmuscle actin.

The protein resides in the cell junction. The protein localises to the tight junction. Functionally, plays a key role in the organization of epithelial monolayers by regulating the actin cytoskeleton. May be involved in ovary development. The chain is Protein POF1B (POF1B) from Homo sapiens (Human).